The primary structure comprises 394 residues: Elongation factor Tu 1 (394 aa).

Residues 10–204 (KPHVNVGTIG…ALDSYIPQPE (195 aa)) enclose the tr-type G domain. Positions 19-26 (GHVDHGKT) are G1. 19–26 (GHVDHGKT) lines the GTP pocket. Thr-26 serves as a coordination point for Mg(2+). Positions 60–64 (GITIN) are G2. The interval 81-84 (DCPG) is G3. GTP contacts are provided by residues 81–85 (DCPGH) and 136–139 (NKCD). Positions 136–139 (NKCD) are G4. Positions 174–176 (SAL) are G5.

It belongs to the TRAFAC class translation factor GTPase superfamily. Classic translation factor GTPase family. EF-Tu/EF-1A subfamily. As to quaternary structure, monomer.

It localises to the cytoplasm. The catalysed reaction is GTP + H2O = GDP + phosphate + H(+). GTP hydrolase that promotes the GTP-dependent binding of aminoacyl-tRNA to the A-site of ribosomes during protein biosynthesis. This chain is Elongation factor Tu 1, found in Yersinia pestis bv. Antiqua (strain Nepal516).